The sequence spans 100 residues: uncharacterized protein (100 aa).

A helical transmembrane segment spans residues 13-32 (IWSSLNIICLMVTFLNVQLS).

Its subcellular location is the mitochondrion membrane. This is an uncharacterized protein from Schizosaccharomyces pombe (strain 972 / ATCC 24843) (Fission yeast).